A 623-amino-acid polypeptide reads, in one-letter code: UvrABC system protein C (623 aa).

Residues 21 to 100 (AEPGVYLMRD…IKTHQPPYNV (80 aa)) enclose the GIY-YIG domain. In terms of domain architecture, UVR spans 210–245 (DELIRELQEKMIQAAEQENYEAAARYRDQIRGLEQL).

Belongs to the UvrC family. Interacts with UvrB in an incision complex.

It is found in the cytoplasm. The UvrABC repair system catalyzes the recognition and processing of DNA lesions. UvrC both incises the 5' and 3' sides of the lesion. The N-terminal half is responsible for the 3' incision and the C-terminal half is responsible for the 5' incision. The protein is UvrABC system protein C of Synechococcus sp. (strain JA-2-3B'a(2-13)) (Cyanobacteria bacterium Yellowstone B-Prime).